Reading from the N-terminus, the 204-residue chain is Protein OPG030 (204 aa).

A BACK domain is found at 95–177; the sequence is FLRQYINNNI…ITYSELTNAI (83 aa).

Belongs to the orthopoxvirus OPG030 family.

The polypeptide is Protein OPG030 (OPG30) (Homo sapiens (Human)).